The primary structure comprises 263 residues: Palmitoyltransferase ZDHHC22 (263 aa).

Over 1–9 the chain is Cytoplasmic; it reads MLALRLLNV. A helical membrane pass occupies residues 10 to 30; the sequence is VAPAYFLCISLVTFVLQLFLF. Residues 31–48 are Lumenal-facing; that stretch reads LPSMREDPTATPLFSPAV. Residues 49–69 traverse the membrane as a helical segment; that stretch reads LHGALFLFLSANALGNYVLVI. Topologically, residues 70-125 are cytoplasmic; the sequence is QNSPDDLGTCQGTMSQRPQCPPPSTHFCRVCSRVTLRHDHHCFFTGNCIGSRNMRN. The region spanning 91–131 is the DHHC domain; sequence PPSTHFCRVCSRVTLRHDHHCFFTGNCIGSRNMRNFILFCL. C111 functions as the S-palmitoyl cysteine intermediate in the catalytic mechanism. The next 2 membrane-spanning stretches (helical) occupy residues 126-146 and 147-167; these read FILF…AGVA and YISA…TLLP. Over 168-182 the chain is Cytoplasmic; it reads TSISQFFSGAVLGSD. A helical transmembrane segment spans residues 183 to 203; that stretch reads MFVILMLYLWFAVGLACAGFC. Over 204–263 the chain is Lumenal; the sequence is CHQLLLILRGQTRYQVRKGMAVRARPWRKNLQEVFGKRWLLGLLVPMFNVGTESSKQQDK.

This sequence belongs to the DHHC palmitoyltransferase family. Interacts with CNN3.

Its subcellular location is the endoplasmic reticulum membrane. The protein localises to the golgi apparatus membrane. It catalyses the reaction L-cysteinyl-[protein] + hexadecanoyl-CoA = S-hexadecanoyl-L-cysteinyl-[protein] + CoA. Its function is as follows. Palmitoyltransferase that could catalyze the addition of palmitate onto various protein substrates and be involved in a variety of cellular processes. Catalyzes the palmitoylation of KCNMA1, regulating localization of KCNMA1 to the plasma membrane. Might also mediate palmitoylation of CNN3. The protein is Palmitoyltransferase ZDHHC22 of Mus musculus (Mouse).